Consider the following 426-residue polypeptide: uncharacterized protein (426 aa).

The N-terminal stretch at 1–23 (MKKFILFLIILLFSIYFLNVSSA) is a signal peptide.

This is an uncharacterized protein from Methanocaldococcus jannaschii (strain ATCC 43067 / DSM 2661 / JAL-1 / JCM 10045 / NBRC 100440) (Methanococcus jannaschii).